The following is a 175-amino-acid chain: Disulfide bond formation protein B 2 (175 aa).

Residues 1 to 9 (MYLARTRFL) are Cytoplasmic-facing. A helical transmembrane segment spans residues 10–26 (FFLASLACASIIGVAFY). The Periplasmic segment spans residues 27-44 (LQQAVGLDPCTLCMVQRA). Cysteine 36 and cysteine 39 are oxidised to a cystine. A helical membrane pass occupies residues 45–61 (AFIACGVLALCAACHAP). Residues 62–68 (GPTGTRR) lie on the Cytoplasmic side of the membrane. A helical transmembrane segment spans residues 69 to 85 (YSLGLLLVALAGLAGAG). The Periplasmic segment spans residues 86–142 (TQVWLQTASADQLIPFITRLEQILSLLSLDMCIDRLRSDALFCAEITWTLFGISLPE). Residues 143–161 (WSLLAFTGLALLPLYPLFS) form a helical membrane-spanning segment. Over 162–175 (ELSHWLATRDRGGY) the chain is Cytoplasmic.

This sequence belongs to the DsbB family.

Its subcellular location is the cell inner membrane. Functionally, required for disulfide bond formation in some periplasmic proteins. Acts by oxidizing the DsbA protein. The sequence is that of Disulfide bond formation protein B 2 from Pseudomonas syringae pv. syringae (strain B728a).